Reading from the N-terminus, the 535-residue chain is Bifunctional purine biosynthesis protein PurH (535 aa).

Residues 6–151 (TRLPIRRALI…KNHKDVAIVV (146 aa)) enclose the MGS-like domain.

Belongs to the PurH family.

The catalysed reaction is (6R)-10-formyltetrahydrofolate + 5-amino-1-(5-phospho-beta-D-ribosyl)imidazole-4-carboxamide = 5-formamido-1-(5-phospho-D-ribosyl)imidazole-4-carboxamide + (6S)-5,6,7,8-tetrahydrofolate. The enzyme catalyses IMP + H2O = 5-formamido-1-(5-phospho-D-ribosyl)imidazole-4-carboxamide. Its pathway is purine metabolism; IMP biosynthesis via de novo pathway; 5-formamido-1-(5-phospho-D-ribosyl)imidazole-4-carboxamide from 5-amino-1-(5-phospho-D-ribosyl)imidazole-4-carboxamide (10-formyl THF route): step 1/1. The protein operates within purine metabolism; IMP biosynthesis via de novo pathway; IMP from 5-formamido-1-(5-phospho-D-ribosyl)imidazole-4-carboxamide: step 1/1. The chain is Bifunctional purine biosynthesis protein PurH from Pseudomonas aeruginosa (strain LESB58).